The following is a 633-amino-acid chain: Probable potassium transport system protein Kup 2 (633 aa).

A run of 11 helical transmembrane segments spans residues 59–79 (ISAILWALMVVVSLKYVILIM), 110–130 (ILLVGLFGAALFYGDAVLTPA), 145–165 (TALQPYVLPASVGVLIALFLF), 173–193 (IGALFGPVTIVWFLALAAAGI), 219–239 (GFASFAVLGAVLLAFTGAEAL), 256–276 (FGLVFPALALNYLGQGALIIV), 287–307 (LLYPSWALYPMVALATAATVI), 345–365 (IYIPTLNGMLLVAVLVAVLGF), 374–394 (AYGVAVTGTMLVTTLLTFFVI), 402–422 (LLLSLVATGFFIAVDMAFVSS), and 429–449 (EGGWFPLVVGAGIFVVMLTWV).

This sequence belongs to the HAK/KUP transporter (TC 2.A.72) family.

Its subcellular location is the cell inner membrane. The enzyme catalyses K(+)(in) + H(+)(in) = K(+)(out) + H(+)(out). Functionally, transport of potassium into the cell. Likely operates as a K(+):H(+) symporter. The protein is Probable potassium transport system protein Kup 2 of Cupriavidus necator (strain ATCC 17699 / DSM 428 / KCTC 22496 / NCIMB 10442 / H16 / Stanier 337) (Ralstonia eutropha).